The primary structure comprises 120 residues: Small ribosomal subunit protein uS13 (120 aa).

The segment at 93 to 120 is disordered; the sequence is RRGLPCRGQKTKTNARTRKGKRKTVGAA.

The protein belongs to the universal ribosomal protein uS13 family. As to quaternary structure, part of the 30S ribosomal subunit. Forms a loose heterodimer with protein S19. Forms two bridges to the 50S subunit in the 70S ribosome.

Functionally, located at the top of the head of the 30S subunit, it contacts several helices of the 16S rRNA. In the 70S ribosome it contacts the 23S rRNA (bridge B1a) and protein L5 of the 50S subunit (bridge B1b), connecting the 2 subunits; these bridges are implicated in subunit movement. Contacts the tRNAs in the A and P-sites. In Sulfurimonas denitrificans (strain ATCC 33889 / DSM 1251) (Thiomicrospira denitrificans (strain ATCC 33889 / DSM 1251)), this protein is Small ribosomal subunit protein uS13.